We begin with the raw amino-acid sequence, 381 residues long: L-lactate dehydrogenase (381 aa).

Residues 1 to 380 (MIISSASDYR…KPEALVDLSK (380 aa)) enclose the FMN hydroxy acid dehydrogenase domain. Y24 serves as a coordination point for substrate. Positions 106 and 127 each coordinate FMN. Y129 is a substrate binding site. FMN is bound at residue T155. R164 contributes to the substrate binding site. K251 serves as a coordination point for FMN. H275 (proton acceptor) is an active-site residue. R278 contacts substrate. 306-330 (DSGIRNGLDIVRMLALGADATMLGR) serves as a coordination point for FMN.

It belongs to the FMN-dependent alpha-hydroxy acid dehydrogenase family. FMN serves as cofactor.

It is found in the cell inner membrane. The enzyme catalyses (S)-lactate + A = pyruvate + AH2. Its function is as follows. Catalyzes the conversion of L-lactate to pyruvate. Is coupled to the respiratory chain. The chain is L-lactate dehydrogenase from Haemophilus influenzae (strain 86-028NP).